The sequence spans 297 residues: Ribosomal protein L11 methyltransferase (297 aa).

4 residues coordinate S-adenosyl-L-methionine: Thr152, Gly173, Asp195, and Asn234.

Belongs to the methyltransferase superfamily. PrmA family.

Its subcellular location is the cytoplasm. It carries out the reaction L-lysyl-[protein] + 3 S-adenosyl-L-methionine = N(6),N(6),N(6)-trimethyl-L-lysyl-[protein] + 3 S-adenosyl-L-homocysteine + 3 H(+). In terms of biological role, methylates ribosomal protein L11. The polypeptide is Ribosomal protein L11 methyltransferase (Cupriavidus taiwanensis (strain DSM 17343 / BCRC 17206 / CCUG 44338 / CIP 107171 / LMG 19424 / R1) (Ralstonia taiwanensis (strain LMG 19424))).